The chain runs to 204 residues: MKVKICGITDVETAKHACEYGADAIGFVFAESKRKITPGLAKEIIGEIPVHVFKVGVFVNESVEVIQKIAEECGLTHVQLHGDEDNHQIRRLNIPSIKAVGVALEKDIECAKKYDTDYLLFDSPKEKFHGGNGKTFSWELLAHMPNELREKTILAGGLNILNIEEAIRTVQPYMIDVSSGVETEGKKDLKKIKQFIKKAKECSK.

The protein belongs to the TrpF family.

The enzyme catalyses N-(5-phospho-beta-D-ribosyl)anthranilate = 1-(2-carboxyphenylamino)-1-deoxy-D-ribulose 5-phosphate. It functions in the pathway amino-acid biosynthesis; L-tryptophan biosynthesis; L-tryptophan from chorismate: step 3/5. The sequence is that of N-(5'-phosphoribosyl)anthranilate isomerase from Bacillus mycoides (strain KBAB4) (Bacillus weihenstephanensis).